We begin with the raw amino-acid sequence, 380 residues long: Anhydro-N-acetylmuramic acid kinase (380 aa).

9–16 lines the ATP pocket; that stretch reads GTSADGVD.

It belongs to the anhydro-N-acetylmuramic acid kinase family.

The catalysed reaction is 1,6-anhydro-N-acetyl-beta-muramate + ATP + H2O = N-acetyl-D-muramate 6-phosphate + ADP + H(+). It participates in amino-sugar metabolism; 1,6-anhydro-N-acetylmuramate degradation. Its pathway is cell wall biogenesis; peptidoglycan recycling. Functionally, catalyzes the specific phosphorylation of 1,6-anhydro-N-acetylmuramic acid (anhMurNAc) with the simultaneous cleavage of the 1,6-anhydro ring, generating MurNAc-6-P. Is required for the utilization of anhMurNAc either imported from the medium or derived from its own cell wall murein, and thus plays a role in cell wall recycling. The polypeptide is Anhydro-N-acetylmuramic acid kinase (Synechococcus sp. (strain CC9902)).